Consider the following 266-residue polypeptide: NADP-dependent mannitol dehydrogenase (266 aa).

Residues N107 and K140 each coordinate NADP(+). The Proton donor role is filled by S159. Residues Y174, K178, I206, and T208 each coordinate NADP(+). Catalysis depends on Y174, which acts as the Proton acceptor. The active-site Lowers pKa of active site Tyr is K178.

This sequence belongs to the short-chain dehydrogenases/reductases (SDR) family. As to quaternary structure, homotetramer.

It catalyses the reaction D-mannitol + NADP(+) = D-fructose + NADPH + H(+). Its function is as follows. Catalyzes the interconversion between D-mannitol and D-fructose. Plays a key role in liamocins biosynthesis by providing the mannitol moity that is linked to 3,5-dihydroxydecanoic acid (provided by the HR-PKS PKS1) via ester bond formation catalyzed by the esterase EST1. The protein is NADP-dependent mannitol dehydrogenase of Aureobasidium melanogenum (Aureobasidium pullulans var. melanogenum).